An 89-amino-acid chain; its full sequence is Small ribosomal subunit protein bS20 (89 aa).

Residues 1 to 29 (MTLANIKSAKKRAVQSEKRRQHNASQRSM) are disordered.

It belongs to the bacterial ribosomal protein bS20 family.

Functionally, binds directly to 16S ribosomal RNA. This is Small ribosomal subunit protein bS20 from Haemophilus influenzae (strain 86-028NP).